Consider the following 1040-residue polypeptide: Regulator of telomere elongation helicase 1 homolog (1040 aa).

A Helicase ATP-binding domain is found at 52–355; sequence RGINVEFPFE…KGLLLKLQEL (304 aa). 87-94 is a binding site for ATP; that stretch reads SPTGTGKT. Positions 117–137 are disordered; that stretch reads RKNSAIPWSDSDEPLSQSGGG. Positions 181, 202, 210, and 246 each coordinate [4Fe-4S] cluster. The short motif at 289 to 292 is the DEAH box element; it reads DEAH. Positions 926-949 are disordered; the sequence is KVPESQGSASSSVLTAKGNGGGDK. A compositionally biased stretch (polar residues) spans 930 to 939; sequence SQGSASSSVL. Residues 992–999 carry the PIP-box; degenerate motif; that stretch reads QSIVQLFC.

Belongs to the helicase family. RAD3/XPD subfamily.

The protein localises to the nucleus. It carries out the reaction ATP + H2O = ADP + phosphate + H(+). Functionally, a probable ATP-dependent DNA helicase implicated in DNA replication, DNA repair and the maintenance of genomic stability. Acts as an anti-recombinase to counteract toxic recombination and limit crossover during meiosis. Regulates meiotic recombination and crossover homeostasis by physically dissociating strand invasion events and thereby promotes noncrossover repair by meiotic synthesis dependent strand annealing (SDSA) as well as disassembly of D loop recombination intermediates. Also plays a role in preserving the stability of 45S rDNA repeats. The polypeptide is Regulator of telomere elongation helicase 1 homolog (Arabidopsis thaliana (Mouse-ear cress)).